The following is a 460-amino-acid chain: Muscarinic acetylcholine receptor M1 (460 aa).

Over 1–22 (MNTSAPPAVSPNITVLAPGKGP) the chain is Extracellular. 2 N-linked (GlcNAc...) asparagine glycosylation sites follow: Asn-2 and Asn-12. A helical transmembrane segment spans residues 23–48 (WQVAFIGITTGLLSLATVTGNLLVLI). Residues 49–62 (SFKVNTELKTVNNY) lie on the Cytoplasmic side of the membrane. Residues 63-84 (FLLSLACADLIIGTFSMNLYTT) form a helical membrane-spanning segment. Residues 85–95 (YLLMGHWALGT) lie on the Extracellular side of the membrane. Residues 96–121 (LACDLWLALDYVASNASVMNLLLISF) traverse the membrane as a helical segment. Cys-98 and Cys-178 are disulfide-bonded. Over 122 to 142 (DRYFSVTRPLSYRAKRTPRRA) the chain is Cytoplasmic. Residues 143-164 (ALMIGLAWLVSFVLWAPAILFW) form a helical membrane-spanning segment. Residues 165–185 (QYLVGERTVLAGQCYIQFLSQ) are Extracellular-facing. A helical transmembrane segment spans residues 186–209 (PIITFGTAMAAFYLPVTVMCTLYW). Topologically, residues 210-366 (RIYRETENRA…LVKEKKAART (157 aa)) are cytoplasmic. Disordered stretches follow at residues 225–256 (LQGS…ETPP), 274–297 (WKEE…EEPG), and 310–351 (EAQA…QLAK). Thr-230 carries the post-translational modification Phosphothreonine. Low complexity predominate over residues 238 to 247 (SSSSERSQPG). Basic residues predominate over residues 328 to 343 (RPTKKGRDRAGKGQKP). A helical membrane pass occupies residues 367–390 (LSAILLAFILTWTPYNIMVLVSTF). The Extracellular segment spans residues 391 to 397 (CKDCVPE). The helical transmembrane segment at 398-420 (TLWELGYWLCYVNSTINPMCYAL) threads the bilayer. The Cytoplasmic segment spans residues 421 to 460 (CNKAFRDTFRLLLLCRWDKRRWRKIPKRPGSVHRTPSRQC). Thr-428 carries the post-translational modification Phosphothreonine. A Phosphoserine modification is found at Ser-451. Position 455 is a phosphothreonine (Thr-455). Phosphoserine is present on Ser-457.

This sequence belongs to the G-protein coupled receptor 1 family. Muscarinic acetylcholine receptor subfamily. CHRM1 sub-subfamily. Interacts with GPRASP2. Interacts with TMEM147.

It localises to the cell membrane. The protein localises to the postsynaptic cell membrane. Functionally, the muscarinic acetylcholine receptor mediates various cellular responses, including inhibition of adenylate cyclase, breakdown of phosphoinositides and modulation of potassium channels through the action of G proteins. Primary transducing effect is Pi turnover. This is Muscarinic acetylcholine receptor M1 (CHRM1) from Homo sapiens (Human).